Consider the following 232-residue polypeptide: tRNA (guanine-N(7)-)-methyltransferase (232 aa).

The S-adenosyl-L-methionine site is built by Glu-63, Glu-88, Asp-115, and Asp-137. Asp-137 is an active-site residue. Residues Lys-141, Asp-173, and 211–214 (TRYE) contribute to the substrate site.

It belongs to the class I-like SAM-binding methyltransferase superfamily. TrmB family.

It catalyses the reaction guanosine(46) in tRNA + S-adenosyl-L-methionine = N(7)-methylguanosine(46) in tRNA + S-adenosyl-L-homocysteine. It functions in the pathway tRNA modification; N(7)-methylguanine-tRNA biosynthesis. In terms of biological role, catalyzes the formation of N(7)-methylguanine at position 46 (m7G46) in tRNA. The protein is tRNA (guanine-N(7)-)-methyltransferase of Chelativorans sp. (strain BNC1).